Here is a 93-residue protein sequence, read N- to C-terminus: Pyrimidine/purine nucleoside phosphorylase (93 aa).

This sequence belongs to the nucleoside phosphorylase PpnP family.

It catalyses the reaction a purine D-ribonucleoside + phosphate = a purine nucleobase + alpha-D-ribose 1-phosphate. It carries out the reaction adenosine + phosphate = alpha-D-ribose 1-phosphate + adenine. The enzyme catalyses cytidine + phosphate = cytosine + alpha-D-ribose 1-phosphate. The catalysed reaction is guanosine + phosphate = alpha-D-ribose 1-phosphate + guanine. It catalyses the reaction inosine + phosphate = alpha-D-ribose 1-phosphate + hypoxanthine. It carries out the reaction thymidine + phosphate = 2-deoxy-alpha-D-ribose 1-phosphate + thymine. The enzyme catalyses uridine + phosphate = alpha-D-ribose 1-phosphate + uracil. The catalysed reaction is xanthosine + phosphate = alpha-D-ribose 1-phosphate + xanthine. Catalyzes the phosphorolysis of diverse nucleosides, yielding D-ribose 1-phosphate and the respective free bases. Can use uridine, adenosine, guanosine, cytidine, thymidine, inosine and xanthosine as substrates. Also catalyzes the reverse reactions. In Pseudomonas syringae pv. tomato (strain ATCC BAA-871 / DC3000), this protein is Pyrimidine/purine nucleoside phosphorylase.